The sequence spans 64 residues: Large ribosomal subunit protein uL29 (64 aa).

The protein belongs to the universal ribosomal protein uL29 family.

The protein is Large ribosomal subunit protein uL29 of Teredinibacter turnerae (strain ATCC 39867 / T7901).